The primary structure comprises 413 residues: Lamin tail domain-containing protein 1 (413 aa).

Disordered stretches follow at residues 1-25 (MMKE…VQDG) and 102-128 (HKDS…SDVD). Residues 107–128 (LGKQSTSSMVPRRQPQSSSDVD) show a composition bias toward polar residues. The LTD domain occupies 169 to 287 (EVGQFTSSSL…EAIAWYTPIH (119 aa)). Residues 356 to 413 (LPNKSPWCRNPNTSPHPYSSLIDSHDSDISESSLDTQLKPQPTKPKPDPGTKKKKAKS) are disordered. Positions 385–396 (SESSLDTQLKPQ) are enriched in low complexity.

The protein belongs to the intermediate filament family.

This chain is Lamin tail domain-containing protein 1 (Lmntd1), found in Mus musculus (Mouse).